We begin with the raw amino-acid sequence, 179 residues long: Inner membrane-spanning protein YciB (179 aa).

The next 5 membrane-spanning stretches (helical) occupy residues Ile22–Val42, Met50–Asn70, Trp76–Met96, Leu121–Leu141, and Phe149–Ile169.

Belongs to the YciB family.

It localises to the cell inner membrane. In terms of biological role, plays a role in cell envelope biogenesis, maintenance of cell envelope integrity and membrane homeostasis. This chain is Inner membrane-spanning protein YciB, found in Shigella boydii serotype 4 (strain Sb227).